We begin with the raw amino-acid sequence, 901 residues long: Probable inorganic carbon transporter subunit DabA (901 aa).

Positions 424, 426, 606, and 621 each coordinate Zn(2+).

This sequence belongs to the inorganic carbon transporter (TC 9.A.2) DabA family. As to quaternary structure, forms a complex with DabB. The cofactor is Zn(2+).

It is found in the cell membrane. Functionally, part of an energy-coupled inorganic carbon pump. The polypeptide is Probable inorganic carbon transporter subunit DabA (Staphylococcus aureus (strain bovine RF122 / ET3-1)).